Reading from the N-terminus, the 480-residue chain is Probable cobyric acid synthase (480 aa).

The 186-residue stretch at 246–431 folds into the GATase cobBQ-type domain; the sequence is PVRIAVIRLP…MHGLFLNPSA (186 aa). Residue cysteine 325 is the Nucleophile of the active site. The active site involves histidine 423.

It belongs to the CobB/CobQ family. CobQ subfamily.

The protein operates within cofactor biosynthesis; adenosylcobalamin biosynthesis. Functionally, catalyzes amidations at positions B, D, E, and G on adenosylcobyrinic A,C-diamide. NH(2) groups are provided by glutamine, and one molecule of ATP is hydrogenolyzed for each amidation. In Methanoregula boonei (strain DSM 21154 / JCM 14090 / 6A8), this protein is Probable cobyric acid synthase.